The sequence spans 315 residues: piRNA biogenesis protein EXD1 (315 aa).

The 3'-5' exonuclease domain occupies 141-228 (IYIFDIQVMQ…ECLTNYLGLQ (88 aa)).

It belongs to the EXD1 family. Homodimer. Component of the PET complex, at least composed of EXD1, SIWI, TDRD12 and piRNAs.

The protein localises to the cytoplasm. RNA-binding component of the PET complex, a multiprotein complex required for the processing of piRNAs during spermatogenesis. The piRNA metabolic process mediates the repression of transposable elements during meiosis by forming complexes composed of piRNAs and Piwi proteins and governs the methylation and subsequent repression of transposable elements, preventing their mobilization, which is essential for the germline integrity. The PET complex is required during the secondary piRNAs metabolic process for the PIWIL2 slicing-triggered loading of PIWIL4 piRNAs. In the PET complex, EXD1 probably acts as an RNA adapter. EXD1 is an inactive exonuclease. This chain is piRNA biogenesis protein EXD1, found in Bombyx mori (Silk moth).